The chain runs to 244 residues: Phosphoadenosine 5'-phosphosulfate reductase (244 aa).

C239 serves as the catalytic Nucleophile; cysteine thiosulfonate intermediate.

It belongs to the PAPS reductase family. CysH subfamily.

Its subcellular location is the cytoplasm. It catalyses the reaction [thioredoxin]-disulfide + sulfite + adenosine 3',5'-bisphosphate + 2 H(+) = [thioredoxin]-dithiol + 3'-phosphoadenylyl sulfate. Its pathway is sulfur metabolism; hydrogen sulfide biosynthesis; sulfite from sulfate: step 3/3. Its function is as follows. Catalyzes the formation of sulfite from phosphoadenosine 5'-phosphosulfate (PAPS) using thioredoxin as an electron donor. The polypeptide is Phosphoadenosine 5'-phosphosulfate reductase (Buchnera aphidicola subsp. Acyrthosiphon pisum (strain Tuc7)).